The sequence spans 430 residues: Glutamate-1-semialdehyde 2,1-aminomutase (430 aa).

Lys-270 is subject to N6-(pyridoxal phosphate)lysine.

It belongs to the class-III pyridoxal-phosphate-dependent aminotransferase family. HemL subfamily. Homodimer. It depends on pyridoxal 5'-phosphate as a cofactor.

It is found in the cytoplasm. It catalyses the reaction (S)-4-amino-5-oxopentanoate = 5-aminolevulinate. The protein operates within porphyrin-containing compound metabolism; protoporphyrin-IX biosynthesis; 5-aminolevulinate from L-glutamyl-tRNA(Glu): step 2/2. This is Glutamate-1-semialdehyde 2,1-aminomutase from Cupriavidus necator (strain ATCC 17699 / DSM 428 / KCTC 22496 / NCIMB 10442 / H16 / Stanier 337) (Ralstonia eutropha).